The sequence spans 127 residues: Large-conductance mechanosensitive channel (127 aa).

The next 3 helical transmembrane spans lie at 8-28 (FAFKGNVLDLAIGVIIGAAFG), 30-50 (IVTALVDVVIMPIISIILSLI), and 70-90 (IGVLIKTIIEFLIIAFVLFLF).

The protein belongs to the MscL family. Homopentamer.

The protein resides in the cell membrane. Its function is as follows. Channel that opens in response to stretch forces in the membrane lipid bilayer. May participate in the regulation of osmotic pressure changes within the cell. The chain is Large-conductance mechanosensitive channel from Herpetosiphon aurantiacus (strain ATCC 23779 / DSM 785 / 114-95).